A 67-amino-acid polypeptide reads, in one-letter code: MEVNKESLVADELHRMFLAGELQITVEEDINNISERLRNGDLSLDRLSGEDVFIKETVNEALRRVEQ.

This is an uncharacterized protein from Bacillus subtilis (strain 168).